The primary structure comprises 188 residues: dCTP deaminase (188 aa).

A dCTP-binding site is contributed by 109-114 (KSTYAR). The active-site Proton donor/acceptor is E135. The dCTP site is built by Q154, Y168, and Q178.

It belongs to the dCTP deaminase family. In terms of assembly, homotrimer.

It carries out the reaction dCTP + H2O + H(+) = dUTP + NH4(+). It participates in pyrimidine metabolism; dUMP biosynthesis; dUMP from dCTP (dUTP route): step 1/2. In terms of biological role, catalyzes the deamination of dCTP to dUTP. In Helicobacter acinonychis (strain Sheeba), this protein is dCTP deaminase.